The chain runs to 191 residues: Small ribosomal subunit protein uS5 (191 aa).

The segment at 1–20 (MAAERERGGRERSRDREERD) is disordered. The S5 DRBM domain maps to 23-86 (FVDKLVHINR…EAAKRNLTRV (64 aa)).

Belongs to the universal ribosomal protein uS5 family. In terms of assembly, part of the 30S ribosomal subunit. Contacts proteins S4 and S8.

With S4 and S12 plays an important role in translational accuracy. Functionally, located at the back of the 30S subunit body where it stabilizes the conformation of the head with respect to the body. In Rhodopseudomonas palustris (strain HaA2), this protein is Small ribosomal subunit protein uS5.